We begin with the raw amino-acid sequence, 122 residues long: Phycocyanin PC645 alpha-2 subunit (122 aa).

Positions 54 and 68 each coordinate (2R,3E)-phycocyanobilin. Mesobiliverdin-binding residues include Cys70, Lys76, Glu77, and Cys92.

Belongs to the phycoerythrin family. Heterotetramer of 2 different alpha chains and 2 identical beta chains which form 2 alpha-beta heterodimers within the heterotetramer. In terms of processing, contains two phycocyanobilin chromophores and one mesobiliverdin chromophore with binding mediated by both the alpha and beta subunits.

Its subcellular location is the plastid. The protein localises to the chloroplast thylakoid membrane. Its function is as follows. Light-harvesting photosynthetic tetrapyrrole chromophore-protein from the phycobiliprotein complex. In Chroomonas sp. (strain CCMP270), this protein is Phycocyanin PC645 alpha-2 subunit.